Here is a 227-residue protein sequence, read N- to C-terminus: MAETKTLAAAARHGTGKGAARSVRREGRIPGVIYGGGDPAEPITLDYRELNKLIYAGHFLTTLFEIDVAGTKQRVIPRDYQLDPIKDLPLHVDFLRLKPGASLKVEVPVHFLNQETCPGVKKGGSVNIVRHSIELRVPADDIPEAITADLGELEINDSLHLTALALPQGCRPTQRERDFTIVTITPPLVVAETPVAAAAAAAAPKGKAGAKAAPAAAAAPAAPAKKK.

Residues methionine 1–serine 22 form a disordered region.

This sequence belongs to the bacterial ribosomal protein bL25 family. CTC subfamily. In terms of assembly, part of the 50S ribosomal subunit; part of the 5S rRNA/L5/L18/L25 subcomplex. Contacts the 5S rRNA. Binds to the 5S rRNA independently of L5 and L18.

Functionally, this is one of the proteins that binds to the 5S RNA in the ribosome where it forms part of the central protuberance. The polypeptide is Large ribosomal subunit protein bL25 (Methylocella silvestris (strain DSM 15510 / CIP 108128 / LMG 27833 / NCIMB 13906 / BL2)).